Consider the following 1157-residue polypeptide: DNA-directed RNA polymerase subunit beta (1157 aa).

This sequence belongs to the RNA polymerase beta chain family. In terms of assembly, the RNAP catalytic core consists of 2 alpha, 1 beta, 1 beta' and 1 omega subunit. When a sigma factor is associated with the core the holoenzyme is formed, which can initiate transcription.

It catalyses the reaction RNA(n) + a ribonucleoside 5'-triphosphate = RNA(n+1) + diphosphate. Its function is as follows. DNA-dependent RNA polymerase catalyzes the transcription of DNA into RNA using the four ribonucleoside triphosphates as substrates. This chain is DNA-directed RNA polymerase subunit beta, found in Tropheryma whipplei (strain TW08/27) (Whipple's bacillus).